Here is a 550-residue protein sequence, read N- to C-terminus: Iduronate 2-sulfatase (550 aa).

Positions 1–25 (MPPPRTGRGLLWLGLVLSSVCVALG) are cleaved as a signal peptide. The propeptide occupies 26 to 33 (SETQANST). Ca(2+)-binding residues include Asp-45, Asp-46, and Cys-84. The active-site Nucleophile is Cys-84. Position 84 is a 3-oxoalanine (Cys) (Cys-84). Residue Asn-115 is glycosylated (N-linked (GlcNAc...) asparagine). Residue His-138 is part of the active site. Asn-144 carries an N-linked (GlcNAc...) asparagine glycan. The cysteines at positions 171 and 184 are disulfide-linked. Residues Asn-246, Asn-280, and Asn-325 are each glycosylated (N-linked (GlcNAc...) asparagine). 2 residues coordinate Ca(2+): Asp-334 and His-335. Cys-422 and Cys-432 are disulfide-bonded. 2 N-linked (GlcNAc...) asparagine glycosylation sites follow: Asn-513 and Asn-537.

This sequence belongs to the sulfatase family. In terms of assembly, monomer. The 58-kDa mature form is composed of two chains resulting from proteolitic processing, the 42-kDa chain and the 14-kDa chain that remain stably associated and form the 58-kDa intermediate form which is enzymatically active. It depends on Ca(2+) as a cofactor. In terms of processing, synthesized as a 75-kDa precursor form in the endoplasmic reticulum (ER), and then processed by proteolytic cleavage through various intermediates to yield a 55-kDa mature form, with the release of an 18 kDa polypeptide. The conversion to 3-oxoalanine (also known as C-formylglycine, FGly), of a serine or cysteine residue in prokaryotes and of a cysteine residue in eukaryotes, is critical for catalytic activity. As to expression, liver, kidney, lung, and placenta.

The protein resides in the lysosome. It carries out the reaction Hydrolysis of the 2-sulfate groups of the L-iduronate 2-sulfate units of dermatan sulfate, heparan sulfate and heparin.. Lysosomal enzyme involved in the degradation pathway of dermatan sulfate and heparan sulfate. The protein is Iduronate 2-sulfatase (IDS) of Homo sapiens (Human).